A 215-amino-acid polypeptide reads, in one-letter code: 2-dehydro-3-deoxy-phosphogluconate aldolase (215 aa).

The active-site Proton acceptor is the Glu-46. Arg-50, Thr-74, and Lys-134 together coordinate pyruvate. Lys-134 acts as the Schiff-base intermediate with substrate in catalysis.

The protein belongs to the KHG/KDPG aldolase family. As to quaternary structure, homotrimer.

The catalysed reaction is 2-dehydro-3-deoxy-6-phospho-D-gluconate = D-glyceraldehyde 3-phosphate + pyruvate. It functions in the pathway carbohydrate acid metabolism; 2-dehydro-3-deoxy-D-gluconate degradation; D-glyceraldehyde 3-phosphate and pyruvate from 2-dehydro-3-deoxy-D-gluconate: step 2/2. Its function is as follows. Involved in the degradation of glucose via the Entner-Doudoroff pathway. Catalyzes the reversible, stereospecific retro-aldol cleavage of 2-keto-3-deoxy-6-phosphogluconate (KDPG) to pyruvate and D-glyceraldehyde-3-phosphate. Involved in the degradation of 3,6-anhydro-L-galactose (L-AnG), which is the major monomeric sugar of red macroalgae. The cleavage of KDPG to glyceraldehyde 3-phosphate and pyruvate is the sixth step of this pathway. The protein is 2-dehydro-3-deoxy-phosphogluconate aldolase of Pseudoalteromonas atlantica (strain T6c / ATCC BAA-1087).